The following is a 216-amino-acid chain: Ras-related protein Rab-2B (216 aa).

Residues G16, V17, G18, K19, S20, C21, and T38 each contribute to the GTP site. Position 20 (S20) interacts with Mg(2+). A Switch 1 motif is present at residues 37-42 (LTIGVE). Mg(2+) is bound by residues T38 and D61. The short motif at 63-72 (AGQESFRSIT) is the Switch 2 element. 6 residues coordinate GTP: G64, N119, K120, D122, A150, and K151. Polar residues predominate over residues 189–207 (PQQSITSSVGPCSPQQNVS). Residues 189–216 (PQQSITSSVGPCSPQQNVSDIGPDSGCC) form a disordered region. 2 S-geranylgeranyl cysteine lipidation sites follow: C215 and C216.

Belongs to the small GTPase superfamily. Rab family. Interacts (in GTP-bound form) with GARIN4 (via N-terminus). Interacts (in GTP-bound form) with GARIN5A. Interacts (in GTP-bound form) with GARIN1B. Interacts with VPS39 and VPS41. Requires Mg(2+) as cofactor.

The protein localises to the cell membrane. The protein resides in the endoplasmic reticulum membrane. It localises to the golgi apparatus membrane. Its subcellular location is the cytoplasmic vesicle. It is found in the secretory vesicle. The protein localises to the acrosome. The protein resides in the autophagosome membrane. It carries out the reaction GTP + H2O = GDP + phosphate + H(+). With respect to regulation, regulated by guanine nucleotide exchange factors (GEFs) which promote the exchange of bound GDP for free GTP, GTPase activating proteins (GAPs) which increase the GTP hydrolysis activity, and GDP dissociation inhibitors (GDIs) which inhibit the dissociation of the nucleotide from the GTPase. Its function is as follows. The small GTPases Rab are key regulators of intracellular membrane trafficking, from the formation of transport vesicles to their fusion with membranes. Rabs cycle between active GTP-bound and inactive GDP-bound states. In their active state, drive transport of vesicular carriers from donor organelles to acceptor organelles to regulate the membrane traffic that maintains organelle identity and morphology. Regulates the compacted morphology of the Golgi. Promotes cytosolic DNA-induced innate immune responses. Regulates IFN responses against DNA viruses by regulating the CGAS-STING signaling axis. Together with RAB2A redundantly required for efficient autophagic flux. This chain is Ras-related protein Rab-2B (Rab2b), found in Mus musculus (Mouse).